Here is a 209-residue protein sequence, read N- to C-terminus: Uracil phosphoribosyltransferase (209 aa).

Residues Arg-79, Arg-104, and 131 to 139 (DPMLATGGS) contribute to the 5-phospho-alpha-D-ribose 1-diphosphate site. Uracil is bound by residues Ile-194 and 199–201 (GDA). Residue Asp-200 coordinates 5-phospho-alpha-D-ribose 1-diphosphate.

Belongs to the UPRTase family. Requires Mg(2+) as cofactor.

The catalysed reaction is UMP + diphosphate = 5-phospho-alpha-D-ribose 1-diphosphate + uracil. It functions in the pathway pyrimidine metabolism; UMP biosynthesis via salvage pathway; UMP from uracil: step 1/1. Its activity is regulated as follows. Allosterically activated by GTP. In terms of biological role, catalyzes the conversion of uracil and 5-phospho-alpha-D-ribose 1-diphosphate (PRPP) to UMP and diphosphate. This is Uracil phosphoribosyltransferase from Clostridium tetani (strain Massachusetts / E88).